The primary structure comprises 601 residues: 66 kDa stress protein (601 aa).

10 WD repeats span residues 56–95 (EHAQPATVAKYAPSGFYIASGDLSGTLRIWDTTQLEHPLK), 100–143 (VLSG…GEIT), 145–184 (HSKAIASCDFKATRPFRVITGAEDFQANWFEGPPFKFKHA), 187–226 (EHTRFLTCVRFSPDGEKVLTVGLDKKGFILDGKTGEKVGA), 233–272 (AHALGIYSCSWSPDSKKVLTVSADKSAKIWDDKGTLLTTF), 318–357 (GHNKLVTSLAFDTASKALYSGSYDGVILQWNLETGIAVPI), 435–478 (ASTT…LSEQ), 483–522 (GHRGFLTAIAYSPDGKHFASADQNRDIFVWDKASRKIKVE), 526–565 (YHNARVTSLAWNSNSNNIVTGSLDSHVYVWSVSEPSKHIA), and 569–600 (AHRGGVNAVLWVDEHTVASAGLDCSIKTWTIK).

The protein belongs to the WD repeat AIP1 family.

Functionally, associated with the process of cyst formation. In Physarum polycephalum (Slime mold), this protein is 66 kDa stress protein.